A 241-amino-acid polypeptide reads, in one-letter code: Thymidylate kinase (241 aa).

17 to 24 (GGEGAGKT) is an ATP binding site.

Belongs to the thymidylate kinase family.

The catalysed reaction is dTMP + ATP = dTDP + ADP. Functionally, phosphorylation of dTMP to form dTDP in both de novo and salvage pathways of dTTP synthesis. This is Thymidylate kinase from Thermosynechococcus vestitus (strain NIES-2133 / IAM M-273 / BP-1).